Consider the following 256-residue polypeptide: Trypsin epsilon (256 aa).

Positions 1 to 22 (MLKIAVLLSVLACALAGTIPDG) are cleaved as a signal peptide. The propeptide at 23–30 (LLPQLDGR) is activation peptide. Residues 31–254 (IVGGYETSID…FHEWIERTAR (224 aa)) enclose the Peptidase S1 domain. A disulfide bridge connects residues Cys-56 and Cys-72. Catalysis depends on charge relay system residues His-71 and Asp-116. Disulfide bonds link Cys-180/Cys-197 and Cys-206/Cys-230. Residue Ser-210 is the Charge relay system of the active site.

It belongs to the peptidase S1 family.

The protein resides in the secreted. Its subcellular location is the extracellular space. The catalysed reaction is Preferential cleavage: Arg-|-Xaa, Lys-|-Xaa.. In Drosophila erecta (Fruit fly), this protein is Trypsin epsilon (epsilonTry).